We begin with the raw amino-acid sequence, 409 residues long: MLNMQQHPSAIASLRNQLAAGHIANLTDFWREAESLNVPLVTPVEGAEDEREVTFLWRARHPLQGVYLRLNRVTDKEHVEKGMMSALPETDIWTLTLRLPASYCGSYSLLEIPPGTTAETIALSGGRFATLAGKADPLNKMPEINVRGNAKESVLTLDKAPALSEWNGGFHTGQLLTSMRIIAGKSRQVRLYIPDIDISQPLGLVVLPDGETWFDHLGVCAAIDAAINNRRIVPVAVLGIDNINEHERTEILGGRSKLIKDIAGHLLPMIRAEQPQRQWADRSRTVLAGQSLGGISALMGARYAPETFGLVLSHSPSMWWTPERTSRPGLFSETDTSWVSEHLLSAPPQGVRISLCVGSLEGSTVPHVQQLHQRLITAGVESHCAIYTGGHDYAWWRGALIDGIGLLQG.

It belongs to the Fes family.

The protein resides in the cytoplasm. It catalyses the reaction Fe(III)-C-5-deoxy-beta-D-glucosyl-enterobactin + H2O = Fe(III)-{di[N-(2,3-dihydroxybenzoyl)-L-seryl]-N-(C-5-[deoxy-beta-D-glucosyl]-2,3-dihydroxybenzoyl)-L-serine} + H(+). It carries out the reaction Fe(III)-{di[N-(2,3-dihydroxybenzoyl)-L-seryl]-N-(C-5-[deoxy-beta-D-glucosyl]-2,3-dihydroxybenzoyl)-L-serine} + H2O + H(+) = Fe(III)-{N-(2,3-dihydroxybenzoyl)-L-seryl-N-(C-5-[deoxy-beta-D-glucosyl]-2,3-dihydroxybenzoyl)-L-serine} + N-(2,3-dihydroxybenzoyl)-L-serine. The catalysed reaction is Fe(III)-{N-(2,3-dihydroxybenzoyl)-L-seryl-[N-(C-5-[deoxy-beta-D-glucosyl]-2,3-dihydroxybenzoyl)-L-serine]2} + H2O + H(+) = Fe(III)-{N-(2,3-dihydroxybenzoyl)-L-seryl-N-(C-5-[deoxy-beta-D-glucosyl]-2,3-dihydroxybenzoyl)-L-serine} + N-(C-5-[deoxy-beta-D-glucosyl]-2,3-dihydroxybenzoyl)-L-serine. The enzyme catalyses Fe(III)-di(C-5-deoxy-beta-D-glucosyl)-enterobactin + H2O = Fe(III)-{N-(2,3-dihydroxybenzoyl)-L-seryl-[N-(C-5-[deoxy-beta-D-glucosyl]-2,3-dihydroxybenzoyl)-L-serine]2} + H(+). It catalyses the reaction Fe(III)-{N-(2,3-dihydroxybenzoyl)-L-seryl-[N-(C-5-[deoxy-beta-D-glucosyl]-2,3-dihydroxybenzoyl)-L-serine]2} + H2O + H(+) = Fe(III)-[N-(C-5-[deoxy-beta-D-glucosyl]-2,3-dihydroxybenzoyl)-L-serine]2 + N-(2,3-dihydroxybenzoyl)-L-serine. It carries out the reaction Fe(III)-[N-(C-5-[deoxy-beta-D-glucosyl]-2,3-dihydroxybenzoyl)-L-serine]2 + H2O + H(+) = Fe(III)-[N-(C-5-[deoxy-beta-D-glucosyl]-2,3-dihydroxybenzoyl)-L-serine] + N-(C-5-[deoxy-beta-D-glucosyl]-2,3-dihydroxybenzoyl)-L-serine. In terms of biological role, catalyzes the hydrolysis of both the apo and Fe3(+)-bound forms of enterobactin (Ent), monoglucosyl-C-Ent (MGE), diglucosyl-C-Ent (DGE) and triglucosyl-C-Ent (TGE). Shows higher catalytic efficiencies on Fe3(+)-bound forms. The initial linear trimer products are, in turn, very good substrates for further hydrolytic cleavage by IroD, leading to complete degradation of the trilactone to DHB-Ser and/or Glc-DHB-Ser monomers. Hydrolyzes MGE and DGE regioselectively. May be the ferric MGE/DGE esterase responsible for cytoplasmic iron release. The polypeptide is Iron(III) salmochelin esterase (Escherichia coli O6:H1 (strain CFT073 / ATCC 700928 / UPEC)).